Reading from the N-terminus, the 314-residue chain is Probable dimethyladenosine transferase (314 aa).

Residues His36, Leu38, Gly63, Glu84, Asp112, and Asn127 each coordinate S-adenosyl-L-methionine.

This sequence belongs to the class I-like SAM-binding methyltransferase superfamily. rRNA adenine N(6)-methyltransferase family. In terms of assembly, part of the small subunit (SSU) processome, composed of more than 70 proteins and the RNA chaperone small nucleolar RNA (snoRNA) U3.

It is found in the nucleus. The protein localises to the nucleoplasm. The protein resides in the nucleolus. The catalysed reaction is adenosine(1779)/adenosine(1780) in 18S rRNA + 4 S-adenosyl-L-methionine = N(6)-dimethyladenosine(1779)/N(6)-dimethyladenosine(1780) in 18S rRNA + 4 S-adenosyl-L-homocysteine + 4 H(+). In terms of biological role, specifically dimethylates two adjacent adenosines in the loop of a conserved hairpin near the 3'-end of 18S rRNA in the 40S particle. Involved in the pre-rRNA processing steps leading to small-subunit rRNA production independently of its RNA-modifying catalytic activity. Part of the small subunit (SSU) processome, first precursor of the small eukaryotic ribosomal subunit. During the assembly of the SSU processome in the nucleolus, many ribosome biogenesis factors, an RNA chaperone and ribosomal proteins associate with the nascent pre-rRNA and work in concert to generate RNA folding, modifications, rearrangements and cleavage as well as targeted degradation of pre-ribosomal RNA by the RNA exosome. This chain is Probable dimethyladenosine transferase (dimt1), found in Dictyostelium discoideum (Social amoeba).